The primary structure comprises 277 residues: Anamorsin homolog 2 (277 aa).

Residues 1 to 141 (MDTQPIVLVI…RKPAWDTGSS (141 aa)) form an N-terminal SAM-like domain region. Residues 141–186 (SFKLKKKVAQKPANVVTFDIPAFKVQLGDDLDDLIDEDSLLTEEDL) form a linker region. Positions 197, 207, 210, and 212 each coordinate [2Fe-2S] cluster. The fe-S binding site A stretch occupies residues 197–212 (CEVGKAGRKACKNCTC). 4 residues coordinate [4Fe-4S] cluster: cysteine 238, cysteine 241, cysteine 249, and cysteine 252. 2 consecutive short sequence motifs (cx2C motif) follow at residues 238–241 (CGSC) and 249–252 (CSTC). The interval 238–252 (CGSCGLGDAFRCSTC) is fe-S binding site B.

This sequence belongs to the anamorsin family. Monomer. [2Fe-2S] cluster is required as a cofactor. It depends on [4Fe-4S] cluster as a cofactor.

It is found in the cytoplasm. Its subcellular location is the mitochondrion intermembrane space. In terms of biological role, component of the cytosolic iron-sulfur (Fe-S) protein assembly (CIA) machinery. Required for the maturation of extramitochondrial Fe-S proteins. Part of an electron transfer chain functioning in an early step of cytosolic Fe-S biogenesis, facilitating the de novo assembly of a [4Fe-4S] cluster on the cytosolic Fe-S scaffold complex. Electrons are transferred from NADPH via a FAD- and FMN-containing diflavin oxidoreductase. Together with the diflavin oxidoreductase, also required for the assembly of the diferric tyrosyl radical cofactor of ribonucleotide reductase (RNR), probably by providing electrons for reduction during radical cofactor maturation in the catalytic small subunit. This Picea sitchensis (Sitka spruce) protein is Anamorsin homolog 2.